Here is a 337-residue protein sequence, read N- to C-terminus: Glycerol-3-phosphate dehydrogenase [NAD(P)+] (337 aa).

The NADPH site is built by S17, Y18, H38, and K112. Positions 112, 141, and 143 each coordinate sn-glycerol 3-phosphate. A145 is an NADPH binding site. Residues K197, D250, S260, R261, and N262 each coordinate sn-glycerol 3-phosphate. Residue K197 is the Proton acceptor of the active site. R261 is a binding site for NADPH. The NADPH site is built by V285 and E287.

Belongs to the NAD-dependent glycerol-3-phosphate dehydrogenase family.

It is found in the cytoplasm. The catalysed reaction is sn-glycerol 3-phosphate + NAD(+) = dihydroxyacetone phosphate + NADH + H(+). It catalyses the reaction sn-glycerol 3-phosphate + NADP(+) = dihydroxyacetone phosphate + NADPH + H(+). It functions in the pathway membrane lipid metabolism; glycerophospholipid metabolism. Functionally, catalyzes the reduction of the glycolytic intermediate dihydroxyacetone phosphate (DHAP) to sn-glycerol 3-phosphate (G3P), the key precursor for phospholipid synthesis. This Pasteurella multocida (strain Pm70) protein is Glycerol-3-phosphate dehydrogenase [NAD(P)+].